Here is a 597-residue protein sequence, read N- to C-terminus: 2-isopropylmalate synthase (597 aa).

A unknown region spans residues Met-1–Glu-80. A Pyruvate carboxyltransferase domain is found at Val-87–Val-349. A 2-isopropylmalate synthase region spans residues Val-87 to Val-349. Residues Asp-96, His-284, His-286, and Asn-320 each contribute to the Mn(2+) site. The interval Lys-475–Ile-597 is regulatory domain.

The protein belongs to the alpha-IPM synthase/homocitrate synthase family. LeuA type 1 subfamily. Homodimer. Requires Mn(2+) as cofactor.

The protein localises to the cytoplasm. The enzyme catalyses 3-methyl-2-oxobutanoate + acetyl-CoA + H2O = (2S)-2-isopropylmalate + CoA + H(+). Its pathway is amino-acid biosynthesis; L-leucine biosynthesis; L-leucine from 3-methyl-2-oxobutanoate: step 1/4. Its function is as follows. Catalyzes the condensation of the acetyl group of acetyl-CoA with 3-methyl-2-oxobutanoate (2-ketoisovalerate) to form 3-carboxy-3-hydroxy-4-methylpentanoate (2-isopropylmalate). This is 2-isopropylmalate synthase from Neisseria gonorrhoeae (strain ATCC 700825 / FA 1090).